The following is a 448-amino-acid chain: Probable cytosolic Fe-S cluster assembly factor Bm6838 (448 aa).

8 residues coordinate [4Fe-4S] cluster: Cys27, Cys66, Cys69, Cys72, Cys170, Cys226, Cys370, and Cys374.

This sequence belongs to the NARF family.

Component of the cytosolic iron-sulfur (Fe/S) protein assembly machinery. Required for maturation of extramitochondrial Fe/S proteins. This Brugia malayi (Filarial nematode worm) protein is Probable cytosolic Fe-S cluster assembly factor Bm6838.